Here is a 694-residue protein sequence, read N- to C-terminus: E3 ubiquitin-protein ligase SPL11 (694 aa).

A compositionally biased stretch (acidic residues) spans 1 to 12; it reads MAGDRAEEEEGE. 2 disordered regions span residues 1–21 and 343–363; these read MAGD…ARAA and NGME…ACSS. The 75-residue stretch at 272 to 346 folds into the U-box domain; sequence TIPDEFRCPI…SQWCETNGME (75 aa). Polar residues predominate over residues 350–363; the sequence is RSTQPNKPTPACSS. ARM repeat units lie at residues 398–438, 439–479, 480–520, 521–561, 562–602, and 603–650; these read NANN…NLSI, HEDN…SLSV, IDEY…NLCI, YQGN…ILSS, HPEG…HLCS, and GEHH…FLVQ. Positions 650–667 are enriched in low complexity; sequence QQQEEQESQSQASAQVPP. Residues 650–694 are disordered; that stretch reads QQQEEQESQSQASAQVPPQATPEQVPENDIPEQLDSPASQYPMVV.

In terms of assembly, interacts with SPIN1 (via N-terminus). As to expression, highly expressed in leaf, at intermediate levels in shoot and weakly in root.

It is found in the nucleus. Its subcellular location is the cytoplasm. It catalyses the reaction S-ubiquitinyl-[E2 ubiquitin-conjugating enzyme]-L-cysteine + [acceptor protein]-L-lysine = [E2 ubiquitin-conjugating enzyme]-L-cysteine + N(6)-ubiquitinyl-[acceptor protein]-L-lysine.. Its pathway is protein modification; protein ubiquitination. In terms of biological role, E3 ubiquitin-protein ligase that negatively regulates programmed cell death and disease resistance. Participates in flowering time control by mediating ubiquitination and subsequent proteasomal degradation of SPIN1. The chain is E3 ubiquitin-protein ligase SPL11 (SPL11) from Oryza sativa subsp. japonica (Rice).